Consider the following 311-residue polypeptide: Olfactory receptor 5M8 (311 aa).

Residues 1-24 (MRRNCTLVTEFILLGLTSRRELQI) are Extracellular-facing. Residue Asn-4 is glycosylated (N-linked (GlcNAc...) asparagine). A helical membrane pass occupies residues 25-45 (LLFTLFLAIYMVTVAGNLGMI). The Cytoplasmic portion of the chain corresponds to 46-53 (VLIQANAW). The chain crosses the membrane as a helical span at residues 54 to 74 (LHMPMYFFLSHLSFVDLCFSS). Over 75-98 (NVTPKMLEIFLSEKKSISYPACLV) the chain is Extracellular. Cys-96 and Cys-188 are joined by a disulfide. Residues 99–119 (QCYLFIALVHVEIYILAVMAF) traverse the membrane as a helical segment. The Cytoplasmic portion of the chain corresponds to 120 to 138 (DRYMAICNPLLYGSRMSKS). A helical membrane pass occupies residues 139–159 (VCSFLITVPYVYGALTGLMET). Residues 160 to 195 (MWTYNLAFCGPNEINHFYCADPPLIKLACSDTYNKE) lie on the Extracellular side of the membrane. A helical transmembrane segment spans residues 196 to 216 (LSMFIVAGWNLSFSLFIICIS). At 217–236 (YLYIFPAILKIRSTEGRQKA) the chain is on the cytoplasmic side. Residues 237–257 (FSTCGSHLTAVTIFYATLFFM) form a helical membrane-spanning segment. Topologically, residues 258–270 (YLRPPSKESVEQG) are extracellular. The helical transmembrane segment at 271 to 291 (KMVAVFYTTVIPMLNLIIYSL) threads the bilayer. Over 292 to 311 (RNKNVKEALIKELSMKIYFS) the chain is Cytoplasmic.

The protein belongs to the G-protein coupled receptor 1 family.

It is found in the cell membrane. Functionally, odorant receptor. The polypeptide is Olfactory receptor 5M8 (OR5M8) (Homo sapiens (Human)).